The chain runs to 74 residues: Metallothionein-like protein type 2 (74 aa).

This sequence belongs to the metallothionein superfamily. Type 15 family.

In terms of biological role, metallothioneins have a high content of cysteine residues that bind various heavy metals. The chain is Metallothionein-like protein type 2 from Nicotiana plumbaginifolia (Leadwort-leaved tobacco).